The sequence spans 388 residues: 3-oxo-tetronate kinase (388 aa).

ATP-binding positions include serine 258 and 360-363; that span reads GGET.

Belongs to the four-carbon acid sugar kinase family.

The enzyme catalyses 3-dehydro-L-erythronate + ATP = 3-dehydro-4-O-phospho-L-erythronate + ADP + H(+). It catalyses the reaction 3-dehydro-D-erythronate + ATP = 3-dehydro-4-O-phospho-D-erythronate + ADP + H(+). In terms of biological role, catalyzes the ATP-dependent phosphorylation of 3-oxo-tetronate to 3-oxo-tetronate 4-phosphate. The polypeptide is 3-oxo-tetronate kinase (Escherichia coli (strain K12)).